Reading from the N-terminus, the 325-residue chain is Olfactory receptor 14L1 (325 aa).

At 1 to 43 (MAQFNKNQLIACRRNGTTTSDFNQTEVAEFFLMGFSNSWDIQI) the chain is on the extracellular side. Residues 44–64 (VHAALFFLVYLAAVIGNLLII) form a helical membrane-spanning segment. Residues 65-72 (ILTTLDVH) are Cytoplasmic-facing. A helical membrane pass occupies residues 73 to 93 (LQTPMYFFLRNLSFLDFCYIS). Over 94 to 117 (VTIPKSIVSSLTHDTSISFFGCAL) the chain is Extracellular. A helical transmembrane segment spans residues 118–138 (QAFFFMDLATTEVAILTVMSY). Residues 139–151 (DRYMAICRPLHYE) are Cytoplasmic-facing. A helical transmembrane segment spans residues 152-172 (VIINQGVCLRMMAMSWLSGVI). The Extracellular portion of the chain corresponds to 173–214 (CGFMHVIATFSLPFCGRNRIRQFFCNIPQLLSLLDPKVITIE). Residues 215-235 (IGVMVFGTSLVIISFVVITLS) traverse the membrane as a helical segment. Topologically, residues 236–255 (YMYIFSVIMRIPSKEGRSKT) are cytoplasmic. The helical transmembrane segment at 256 to 276 (FSTCIPHLVVVTLFMISGSIA) threads the bilayer. The Extracellular segment spans residues 277–289 (YVKPISNSPPVLD). Residues 290–310 (VFLSAFYTVVPPTLNPVIYSL) traverse the membrane as a helical segment. The Cytoplasmic portion of the chain corresponds to 311 to 325 (RNRDMKAALRRQCGP).

Belongs to the G-protein coupled receptor 1 family.

Its subcellular location is the cell membrane. Functionally, odorant receptor. The protein is Olfactory receptor 14L1 of Homo sapiens (Human).